We begin with the raw amino-acid sequence, 417 residues long: uncharacterized protein (417 aa).

A run of 10 helical transmembrane segments spans residues 21–41 (ISSL…AFQL), 50–70 (LLMM…GLLA), 88–108 (LTVI…LLSV), 166–186 (SVFY…FFLP), 217–237 (MPLL…LQIG), 255–275 (LAGW…AITG), 283–303 (LLYF…APFL), 308–328 (IAGI…FGLV), 351–371 (AIQS…GVLA), and 373–393 (WIGV…IGLI).

It belongs to the major facilitator superfamily. TCR/Tet family.

The protein resides in the cell membrane. This is an uncharacterized protein from Bacillus subtilis (strain 168).